The sequence spans 101 residues: Large ribosomal subunit protein bL28 (101 aa).

This sequence belongs to the bacterial ribosomal protein bL28 family.

This is Large ribosomal subunit protein bL28 from Rhodopseudomonas palustris (strain BisA53).